Consider the following 391-residue polypeptide: Phosphoglycerate kinase (391 aa).

Substrate is bound by residues 21–23, Arg36, 59–62, Arg113, and Arg146; these read DLN and HLGR. ATP-binding positions include Lys197, Glu319, and 345–348; that span reads GGDT.

Belongs to the phosphoglycerate kinase family. In terms of assembly, monomer.

The protein resides in the cytoplasm. The enzyme catalyses (2R)-3-phosphoglycerate + ATP = (2R)-3-phospho-glyceroyl phosphate + ADP. The protein operates within carbohydrate degradation; glycolysis; pyruvate from D-glyceraldehyde 3-phosphate: step 2/5. This Stenotrophomonas maltophilia (strain K279a) protein is Phosphoglycerate kinase.